Here is a 392-residue protein sequence, read N- to C-terminus: Phosphopentomutase (392 aa).

6 residues coordinate Mn(2+): Asp-14, Asp-286, His-291, Asp-327, His-328, and His-339.

This sequence belongs to the phosphopentomutase family. The cofactor is Mn(2+).

It localises to the cytoplasm. The enzyme catalyses 2-deoxy-alpha-D-ribose 1-phosphate = 2-deoxy-D-ribose 5-phosphate. It catalyses the reaction alpha-D-ribose 1-phosphate = D-ribose 5-phosphate. The protein operates within carbohydrate degradation; 2-deoxy-D-ribose 1-phosphate degradation; D-glyceraldehyde 3-phosphate and acetaldehyde from 2-deoxy-alpha-D-ribose 1-phosphate: step 1/2. In terms of biological role, isomerase that catalyzes the conversion of deoxy-ribose 1-phosphate (dRib-1-P) and ribose 1-phosphate (Rib-1-P) to deoxy-ribose 5-phosphate (dRib-5-P) and ribose 5-phosphate (Rib-5-P), respectively. This Staphylococcus aureus (strain Mu3 / ATCC 700698) protein is Phosphopentomutase.